Here is a 278-residue protein sequence, read N- to C-terminus: Large ribosomal subunit protein uL2 (278 aa).

2 disordered regions span residues 32–54 (SLCR…TRHI) and 221–278 (RGMT…RNAK). The segment covering 232 to 245 (NGGGEGKSKSGGGR) has biased composition (gly residues).

Belongs to the universal ribosomal protein uL2 family. Part of the 50S ribosomal subunit. Forms a bridge to the 30S subunit in the 70S ribosome.

In terms of biological role, one of the primary rRNA binding proteins. Required for association of the 30S and 50S subunits to form the 70S ribosome, for tRNA binding and peptide bond formation. It has been suggested to have peptidyltransferase activity; this is somewhat controversial. Makes several contacts with the 16S rRNA in the 70S ribosome. This chain is Large ribosomal subunit protein uL2, found in Akkermansia muciniphila (strain ATCC BAA-835 / DSM 22959 / JCM 33894 / BCRC 81048 / CCUG 64013 / CIP 107961 / Muc).